A 135-amino-acid chain; its full sequence is Sex-regulated protein janus-A (135 aa).

Residue lysine 37 coordinates substrate. Histidine 63 serves as the catalytic Proton acceptor. Residue 104–106 (SQG) coordinates substrate.

Belongs to the janus family. As to expression, somatic and germline cells. Isoform B is expressed in both sexes and in somatic and germ line cells. Isoform A is expressed in males and is germ line specific.

JanA and janB regulate somatic sex differentiation. This chain is Sex-regulated protein janus-A (janA), found in Drosophila melanogaster (Fruit fly).